Consider the following 76-residue polypeptide: Membrane protein UL43 homolog (76 aa).

Transmembrane regions (helical) follow at residues 7 to 27 (AVCV…SLAF) and 54 to 74 (ISRW…ATII).

It belongs to the alphaherpesvirinae HHV-1 UL43 family.

Its subcellular location is the membrane. The protein is Membrane protein UL43 homolog of Equus caballus (Horse).